Here is a 280-residue protein sequence, read N- to C-terminus: Ribonuclease P protein subunit p38 (280 aa).

At A2 the chain carries N-acetylalanine. Phosphoserine occurs at positions 12, 221, and 230. Positions 202-227 are disordered; the sequence is WLPDRTQGPTDSLETEPSESQDNEIL. The span at 214–226 shows a compositional bias: acidic residues; that stretch reads LETEPSESQDNEI. Residues 254–280 are disordered; sequence QPLKIKKLIPNPSKIRKPPKSKKSISK. The span at 267-280 shows a compositional bias: basic residues; the sequence is KIRKPPKSKKSISK.

The protein belongs to the eukaryotic ribosomal protein eL8 family. As to quaternary structure, component of nuclear RNase P and RNase MRP ribonucleoproteins. RNase P consists of a catalytic RNA moiety and about 10 protein subunits; POP1, POP4, POP5, POP7, RPP14, RPP21, RPP25, RPP30, RPP38 and RPP40. Within the RNase P complex, POP1, POP7 and RPP25 form the 'finger' subcomplex, POP5, RPP14, RPP40 and homodimeric RPP30 form the 'palm' subcomplex, and RPP21, POP4 and RPP38 form the 'wrist' subcomplex. All subunits of the RNase P complex interact with the catalytic RNA. Several subunits of RNase P are also part of the RNase MRP complex. RNase MRP consists of a catalytic RNA moiety and about 8 protein subunits; POP1, POP7, RPP25, RPP30, RPP38, RPP40 and possibly also POP4 and POP5.

The protein localises to the nucleus. It is found in the nucleolus. Component of ribonuclease P, a ribonucleoprotein complex that generates mature tRNA molecules by cleaving their 5'-ends. Also a component of the MRP ribonuclease complex, which cleaves pre-rRNA sequences. The chain is Ribonuclease P protein subunit p38 (Rpp38) from Mus musculus (Mouse).